We begin with the raw amino-acid sequence, 137 residues long: MERTFAIIKPDAVERNVTGKVLAMIEEGGFKIVGMKKIRLSKCQAEGFYYVHKERPFFGDLCAFMSRGPVIALVLEKENAIADWRGLMGATNPANAEAGTIRKALGVSIEENTVHGSDSPESASYEIPYFFNQLELV.

ATP is bound by residues Lys9, Phe57, Arg85, Thr91, Arg102, and Asn112. Catalysis depends on His115, which acts as the Pros-phosphohistidine intermediate.

It belongs to the NDK family. As to quaternary structure, homotetramer. Mg(2+) serves as cofactor.

The protein resides in the cytoplasm. It catalyses the reaction a 2'-deoxyribonucleoside 5'-diphosphate + ATP = a 2'-deoxyribonucleoside 5'-triphosphate + ADP. The catalysed reaction is a ribonucleoside 5'-diphosphate + ATP = a ribonucleoside 5'-triphosphate + ADP. Major role in the synthesis of nucleoside triphosphates other than ATP. The ATP gamma phosphate is transferred to the NDP beta phosphate via a ping-pong mechanism, using a phosphorylated active-site intermediate. This is Nucleoside diphosphate kinase from Citrifermentans bemidjiense (strain ATCC BAA-1014 / DSM 16622 / JCM 12645 / Bem) (Geobacter bemidjiensis).